Here is a 36-residue protein sequence, read N- to C-terminus: Mu-agatoxin-Aa1a (36 aa).

4 cysteine pairs are disulfide-bonded: C2–C17, C9–C22, C16–C32, and C24–C30. Residue N36 is modified to Asparagine amide.

The protein belongs to the neurotoxin 07 (Beta/delta-agtx) family. 04 (aga-5) subfamily. Expressed by the venom gland.

The protein localises to the secreted. Functionally, insecticidal neurotoxin that induces an irreversible spastic paralysis when injected into insects. Modifies presynaptic voltage-gated sodium channels (Nav), causing them to open at the normal resting potential of the nerve. This leads to spontaneous release of neurotransmitter and repetitive action potentials in motor neurons. The sequence is that of Mu-agatoxin-Aa1a from Agelenopsis aperta (North American funnel-web spider).